The sequence spans 269 residues: Aminoglycoside (3'') (9) adenylyltransferase (269 aa).

It catalyses the reaction streptomycin + ATP = 3''-O-adenylylstreptomycin + diphosphate. The enzyme catalyses spectinomycin + ATP = 9-O-adenylylspectinomycin + diphosphate. Mediates bacterial resistance to the antibiotic spectinomycin and probably also to streptomycin. This Rhizobium radiobacter (Agrobacterium tumefaciens) protein is Aminoglycoside (3'') (9) adenylyltransferase.